The sequence spans 443 residues: GTPase Der (443 aa).

2 consecutive EngA-type G domains span residues 3 to 168 (PLLA…PEAP) and 178 to 353 (VHLA…RNRS). GTP-binding positions include 9–16 (GRPNVGKS), 56–60 (DTGGY), 120–123 (NKVE), 184–191 (GRPNVGKS), 231–235 (DTAGL), and 296–299 (NKWD). The KH-like domain maps to 354 to 438 (QNVSTSQLNK…PISLRFLHKN (85 aa)).

The protein belongs to the TRAFAC class TrmE-Era-EngA-EngB-Septin-like GTPase superfamily. EngA (Der) GTPase family. As to quaternary structure, associates with the 50S ribosomal subunit.

GTPase that plays an essential role in the late steps of ribosome biogenesis. This chain is GTPase Der, found in Chlorobium chlorochromatii (strain CaD3).